We begin with the raw amino-acid sequence, 45 residues long: Large ribosomal subunit protein bL34 (45 aa).

Belongs to the bacterial ribosomal protein bL34 family.

This chain is Large ribosomal subunit protein bL34 (rpmH), found in Streptomyces bikiniensis.